A 189-amino-acid polypeptide reads, in one-letter code: Isopentenyl-diphosphate Delta-isomerase 2 (189 aa).

The Mn(2+) site is built by histidine 24 and histidine 30. The 133-residue stretch at 28 to 160 (ALHRAISIFV…PETYSFWLAA (133 aa)) folds into the Nudix hydrolase domain. The active site involves cysteine 65. Cysteine 65 is a binding site for Mg(2+). Mn(2+) is bound at residue histidine 67. Glutamate 85 lines the Mg(2+) pocket. Mn(2+) is bound by residues glutamate 110 and glutamate 112. Residue glutamate 112 is part of the active site.

This sequence belongs to the IPP isomerase type 1 family. Requires Mg(2+) as cofactor. Mn(2+) is required as a cofactor.

The protein resides in the cytoplasm. It catalyses the reaction isopentenyl diphosphate = dimethylallyl diphosphate. It functions in the pathway isoprenoid biosynthesis; dimethylallyl diphosphate biosynthesis; dimethylallyl diphosphate from isopentenyl diphosphate: step 1/1. Functionally, catalyzes the 1,3-allylic rearrangement of the homoallylic substrate isopentenyl (IPP) to its highly electrophilic allylic isomer, dimethylallyl diphosphate (DMAPP). This Aromatoleum aromaticum (strain DSM 19018 / LMG 30748 / EbN1) (Azoarcus sp. (strain EbN1)) protein is Isopentenyl-diphosphate Delta-isomerase 2.